A 522-amino-acid polypeptide reads, in one-letter code: 2-isopropylmalate synthase (522 aa).

A Pyruvate carboxyltransferase domain is found at 5 to 267 (VIIFDTTLRD…ETGINAKEIH (263 aa)). 4 residues coordinate Mn(2+): Asp-14, His-202, His-204, and Asn-238. A regulatory domain region spans residues 392-522 (QLQQLVVQSD…MQKNRELGGV (131 aa)).

Belongs to the alpha-IPM synthase/homocitrate synthase family. LeuA type 1 subfamily. In terms of assembly, homodimer. Mn(2+) is required as a cofactor.

It is found in the cytoplasm. It catalyses the reaction 3-methyl-2-oxobutanoate + acetyl-CoA + H2O = (2S)-2-isopropylmalate + CoA + H(+). Its pathway is amino-acid biosynthesis; L-leucine biosynthesis; L-leucine from 3-methyl-2-oxobutanoate: step 1/4. Its function is as follows. Catalyzes the condensation of the acetyl group of acetyl-CoA with 3-methyl-2-oxobutanoate (2-ketoisovalerate) to form 3-carboxy-3-hydroxy-4-methylpentanoate (2-isopropylmalate). This Shewanella baltica (strain OS223) protein is 2-isopropylmalate synthase.